Reading from the N-terminus, the 240-residue chain is Glutathione S-transferase theta-1 (240 aa).

The GST N-terminal domain maps to 2–82; that stretch reads GLELYLDLLS…YLARKYKVPD (81 aa). Glutathione-binding positions include His-40, 53–54, and 66–67; these read KV and ES. One can recognise a GST C-terminal domain in the interval 88-226; the sequence is DLQACARVDE…AKDSQPADPT (139 aa).

This sequence belongs to the GST superfamily. Theta family. Homodimer.

Its subcellular location is the cytoplasm. The enzyme catalyses RX + glutathione = an S-substituted glutathione + a halide anion + H(+). Its function is as follows. Conjugation of reduced glutathione to a wide number of exogenous and endogenous hydrophobic electrophiles. Also binds steroids, bilirubin, carcinogens and numerous organic anions. Has dichloromethane dehalogenase activity. The chain is Glutathione S-transferase theta-1 (GSTT1) from Bos taurus (Bovine).